A 672-amino-acid chain; its full sequence is Single-strand DNA endonuclease ASTE1 (672 aa).

Residues 349-398 (TFLHTQVENMQRPNAHRISQPIRQIIYGLLLNGPSHAEDIAQNTLPSQLL) are interaction with SHLD2.

Belongs to the asteroid family. As to quaternary structure, interacts with SHLD1, SHLD2, SHLD3, RIF1 and MAD2L2/REV7.

In terms of biological role, structure-specific DNA endonuclease that specifically cleaves single-stranded DNA and 3' overhang DNA. Contributes to the control of DNA double-strand break repair choice by antagonizing BRCA1-dependent homologous recombination (HR) and promoting non-homologous end-joining (NHEJ). Recruited to the single-stranded DNA ends by SHLD2 and cleaves the 3' exposed DNA ends, therefore inhibiting DNA end resection (necessary for HR) and promoting DNA end protection (necessary for NHEJ). This Mus musculus (Mouse) protein is Single-strand DNA endonuclease ASTE1 (Aste1).